Reading from the N-terminus, the 542-residue chain is uncharacterized protein (542 aa).

5 consecutive transmembrane segments (helical) span residues isoleucine 4 to leucine 23, isoleucine 28 to alanine 47, isoleucine 57 to leucine 79, glycine 86 to histidine 108, and proline 151 to alanine 173. RCK C-terminal domains follow at residues arginine 186–cysteine 270 and glutamate 273–serine 356. 6 helical membrane passes run isoleucine 365–proline 384, isoleucine 389–alanine 408, leucine 415–alanine 437, tryptophan 457–tyrosine 479, isoleucine 484–alanine 506, and tyrosine 519–leucine 541.

The protein belongs to the AAE transporter (TC 2.A.81) family.

It is found in the cell membrane. This is an uncharacterized protein from Symbiobacterium thermophilum (strain DSM 24528 / JCM 14929 / IAM 14863 / T).